The following is a 255-amino-acid chain: Small ribosomal subunit protein uS2 (255 aa).

This sequence belongs to the universal ribosomal protein uS2 family.

This Streptococcus pyogenes serotype M1 protein is Small ribosomal subunit protein uS2 (rpsB).